A 310-amino-acid polypeptide reads, in one-letter code: Probable manganese-dependent inorganic pyrophosphatase (310 aa).

The Mn(2+) site is built by His9, Asp13, Asp15, Asp76, His98, and Asp150.

This sequence belongs to the PPase class C family. The cofactor is Mn(2+).

The protein resides in the cytoplasm. The catalysed reaction is diphosphate + H2O = 2 phosphate + H(+). The protein is Probable manganese-dependent inorganic pyrophosphatase of Streptococcus thermophilus (strain CNRZ 1066).